The chain runs to 616 residues: Chaperone protein HscA (616 aa).

This sequence belongs to the heat shock protein 70 family.

Chaperone involved in the maturation of iron-sulfur cluster-containing proteins. Has a low intrinsic ATPase activity which is markedly stimulated by HscB. Involved in the maturation of IscU. This is Chaperone protein HscA from Escherichia fergusonii (strain ATCC 35469 / DSM 13698 / CCUG 18766 / IAM 14443 / JCM 21226 / LMG 7866 / NBRC 102419 / NCTC 12128 / CDC 0568-73).